A 158-amino-acid polypeptide reads, in one-letter code: NADPH-dependent 7-cyano-7-deazaguanine reductase (158 aa).

C56 functions as the Thioimide intermediate in the catalytic mechanism. D63 functions as the Proton donor in the catalytic mechanism. Substrate-binding positions include V78–S80 and H97–E98.

Belongs to the GTP cyclohydrolase I family. QueF type 1 subfamily.

It localises to the cytoplasm. The enzyme catalyses 7-aminomethyl-7-carbaguanine + 2 NADP(+) = 7-cyano-7-deazaguanine + 2 NADPH + 3 H(+). The protein operates within tRNA modification; tRNA-queuosine biosynthesis. Functionally, catalyzes the NADPH-dependent reduction of 7-cyano-7-deazaguanine (preQ0) to 7-aminomethyl-7-deazaguanine (preQ1). In Rhodopseudomonas palustris (strain BisB5), this protein is NADPH-dependent 7-cyano-7-deazaguanine reductase.